The primary structure comprises 726 residues: DNA-directed RNA polymerase subunit beta N-terminal section (726 aa).

This sequence belongs to the RNA polymerase beta chain family. In plastids the minimal PEP RNA polymerase catalytic core is composed of four subunits: alpha, beta, beta', and beta''. When a (nuclear-encoded) sigma factor is associated with the core the holoenzyme is formed, which can initiate transcription.

The protein resides in the plastid. The protein localises to the chloroplast. It catalyses the reaction RNA(n) + a ribonucleoside 5'-triphosphate = RNA(n+1) + diphosphate. In terms of biological role, DNA-dependent RNA polymerase catalyzes the transcription of DNA into RNA using the four ribonucleoside triphosphates as substrates. The sequence is that of DNA-directed RNA polymerase subunit beta N-terminal section (rpoB1) from Tetradesmus obliquus (Green alga).